A 200-amino-acid polypeptide reads, in one-letter code: Probable molybdenum cofactor guanylyltransferase (200 aa).

Residues 9 to 11 (LAG), Lys21, Asp69, and Asp100 contribute to the GTP site. Asp100 provides a ligand contact to Mg(2+).

It belongs to the MobA family. Requires Mg(2+) as cofactor.

Its subcellular location is the cytoplasm. It catalyses the reaction Mo-molybdopterin + GTP + H(+) = Mo-molybdopterin guanine dinucleotide + diphosphate. Functionally, transfers a GMP moiety from GTP to Mo-molybdopterin (Mo-MPT) cofactor (Moco or molybdenum cofactor) to form Mo-molybdopterin guanine dinucleotide (Mo-MGD) cofactor. This Bacillus cereus (strain AH820) protein is Probable molybdenum cofactor guanylyltransferase.